A 663-amino-acid polypeptide reads, in one-letter code: Terreic acid cluster-specific transcription factor atF (663 aa).

Residues 1–20 are compositionally biased toward polar residues; the sequence is MFATFNSSMDNRSSANSPVA. 2 disordered regions span residues 1–28 and 55–126; these read MFAT…PKRT and TRGV…SPSQ. The segment at residues 34–60 is a DNA-binding region (zn(2)-C6 fungal-type); that stretch reads CDWCRLNRVKCDDGQPCKNCRTRGVRC. Basic residues predominate over residues 55-64; it reads TRGVRCRKGS. Composition is skewed to low complexity over residues 73 to 88 and 105 to 125; these read SSSA…QGAQ and ATTS…PSPS.

It is found in the nucleus. Transcription factor that regulates the expression of the gene cluster that mediates the biosynthesis of terreic acid, a quinone epoxide inhibitor of Bruton's tyrosine kinase. This chain is Terreic acid cluster-specific transcription factor atF, found in Aspergillus terreus (strain NIH 2624 / FGSC A1156).